The chain runs to 437 residues: Eukaryotic peptide chain release factor subunit 1 (437 aa).

Ala-2 is modified (N-acetylalanine). Positions 61–64 (NIKS) match the NIKS motif; plays an important role in translational termination motif. Lys-63 carries the post-translational modification 4-hydroxylysine. Lys-87 participates in a covalent cross-link: Glycyl lysine isopeptide (Lys-Gly) (interchain with G-Cter in SUMO2). An N5-methylglutamine modification is found at Gln-185. Thr-347 carries the phosphothreonine modification. Lys-404 is covalently cross-linked (Glycyl lysine isopeptide (Lys-Gly) (interchain with G-Cter in SUMO2)).

It belongs to the eukaryotic release factor 1 family. Component of the eRF1-eRF3-GTP ternary complex, composed of ETF1/ERF1 and eRF3 (GSPT1/ERF3A or GSPT2/ERF3B) and GTP. Component of the transient SURF (SMG1-UPF1-eRF1-eRF3) complex. Interacts with JMJD4. The ETF1-GSPT1 complex interacts with JMJD4. Post-translationally, hydroxylation at Lys-63 by JMJD4 promotes its translational termination efficiency. In terms of processing, methylated at Gln-185 by N6AMT1. Ubiquitinated via 'Lys-6'-linked polyubiquitin chains by RNF14 and RNF25 in response to ribosome collisions (ribosome stalling), leading to its degradation by the proteasome and rescue of stalled ribosomes.

The protein localises to the cytoplasm. Component of the eRF1-eRF3-GTP ternary complex, a ternary complex that mediates translation termination in response to the termination codons. The eRF1-eRF3-GTP complex binds to a stop codon in the ribosomal A-site. ETF1/ERF1 is responsible for stop codon recognition and inducing hydrolysis of peptidyl-tRNA. Following GTP hydrolysis, eRF3 (GSPT1/ERF3A or GSPT2/ERF3B) dissociates, permitting ETF1/eRF1 to accommodate fully in the A-site, followed by hydrolysis of peptidyl-tRNA. Component of the transient SURF complex which recruits UPF1 to stalled ribosomes in the context of nonsense-mediated decay (NMD) of mRNAs containing premature stop codons. Required for SHFL-mediated translation termination which inhibits programmed ribosomal frameshifting (-1PRF) of mRNA from viruses and cellular genes. The polypeptide is Eukaryotic peptide chain release factor subunit 1 (ETF1) (Pongo abelii (Sumatran orangutan)).